We begin with the raw amino-acid sequence, 328 residues long: GMP reductase (328 aa).

The Thioimidate intermediate role is filled by Cys176. Position 205–228 (205–228 (IIADGGIRTHGDIAKSIRFGASMI)) interacts with NADP(+).

It belongs to the IMPDH/GMPR family. GuaC type 2 subfamily.

The enzyme catalyses IMP + NH4(+) + NADP(+) = GMP + NADPH + 2 H(+). Its function is as follows. Catalyzes the irreversible NADPH-dependent deamination of GMP to IMP. It functions in the conversion of nucleobase, nucleoside and nucleotide derivatives of G to A nucleotides, and in maintaining the intracellular balance of A and G nucleotides. This chain is GMP reductase, found in Streptococcus pneumoniae (strain P1031).